Here is a 199-residue protein sequence, read N- to C-terminus: Protein GrpE (199 aa).

Belongs to the GrpE family. Homodimer.

The protein resides in the cytoplasm. Participates actively in the response to hyperosmotic and heat shock by preventing the aggregation of stress-denatured proteins, in association with DnaK and GrpE. It is the nucleotide exchange factor for DnaK and may function as a thermosensor. Unfolded proteins bind initially to DnaJ; upon interaction with the DnaJ-bound protein, DnaK hydrolyzes its bound ATP, resulting in the formation of a stable complex. GrpE releases ADP from DnaK; ATP binding to DnaK triggers the release of the substrate protein, thus completing the reaction cycle. Several rounds of ATP-dependent interactions between DnaJ, DnaK and GrpE are required for fully efficient folding. In Fusobacterium nucleatum subsp. nucleatum (strain ATCC 25586 / DSM 15643 / BCRC 10681 / CIP 101130 / JCM 8532 / KCTC 2640 / LMG 13131 / VPI 4355), this protein is Protein GrpE.